The sequence spans 422 residues: MQCDFVDRILNEYDLLNAIVYRSKFTHEVKVGDVIIGGNNPIVVQSMALGGSGDVYQDAREVLELAQAGSELVRIAINSDKAIKSVPYIRDVLINHGFNSKMIIGCGQYEIARLVKQYPECALALGKIRINPGNIGFGDKRDKNFEDIIEFAIKNDIPIRIGVNWGSLDKYLAAKLMHDNSLRGTPDPDYVVLRKALVISAITSAKHAEKVGLPANKIVISCKVSKVRDLISVYTMLSKICDYPLHLGLTEAGSGVKGIVGSSAGISYLLLHGIGNTIRVSLTQQPGESRTNEVKLCQEILQSIGLRNFSVQVTSCPGCNRTNPKYFHQLVSDVNKYVADRMSVWKSANPGVENMTIAVMGCVVNGPGESKHANLGISMPGYGERSVAAVYQNGEKLCTLEGNNIFEQFVSIIENYVSIYYH.

Residues cysteine 316, cysteine 319, cysteine 362, and glutamate 369 each coordinate [4Fe-4S] cluster.

Belongs to the IspG family. Requires [4Fe-4S] cluster as cofactor.

It carries out the reaction (2E)-4-hydroxy-3-methylbut-2-enyl diphosphate + oxidized [flavodoxin] + H2O + 2 H(+) = 2-C-methyl-D-erythritol 2,4-cyclic diphosphate + reduced [flavodoxin]. Its pathway is isoprenoid biosynthesis; isopentenyl diphosphate biosynthesis via DXP pathway; isopentenyl diphosphate from 1-deoxy-D-xylulose 5-phosphate: step 5/6. Functionally, converts 2C-methyl-D-erythritol 2,4-cyclodiphosphate (ME-2,4cPP) into 1-hydroxy-2-methyl-2-(E)-butenyl 4-diphosphate. This chain is 4-hydroxy-3-methylbut-2-en-1-yl diphosphate synthase (flavodoxin), found in Ehrlichia ruminantium (strain Gardel).